The sequence spans 1097 residues: MSSSALQVAKTATYLPDLVEVQRASFKWFLEKGLIEELQNFSPISDYTGKLELHFIGEEYRLKRPRHDVEEAKRRDATFASQMYVTCRLINKETGEIKEQEVFIGELPLMTERGTFIINGAERVIVNQIVRSPGVYFKDELDKNGRRTYNASVIPNRGAWLKFETDKNNLLYVRVDKTRKINAHVLMRAMGLSDNDVVDKLRHPEFYQSSIESANDEGINSEDQALLELYKKLRPGEPPSVSGGQQLLHSRFFDPKRYDLGRVGRYKINKKLRLTVPDNVRTLTHEDVLSTIDYLINLELDIGGASLDDIDHLGNRRVRSVGELLQNQVRVGLNRLERIIKERMTVGETDSLTPAQLVNPKPLVAAIKEFFGSSQLSQFMDQTNPLAELTHKRRISALGPGGLTRERAGFAVRDIHPSHYGRLCPIETPEGPNAGLINSLATHARVNEYGFIETPFWEVKNGKVDKEGNPVYLSADLEDECRVAPGDVATDKDGNIIANLIPVRYRQDFEKVPPHQVDYVQLSPVQVISVATSLIPFLEHDDANRALMGSNMQRQAVPLLRPERPLVGTGLESQVARDSGMVPITKVNGTVSYVDANEIVVKDEDGNEHFHYLQKYQRSNQDTCLNQRPIVKIGDRVISGQVLADGSACEGGEIALGQNVLIAYMPWEGYNYEDAILVSERMVTDDLYTSVHIEKYEIEARQTKLGPEEITREIPNISEESLNNLDEMGIIRIGAFVESGDILVGKVTPKGESDQPPEEKLLRAIFGEKARDVRDNSLRVPKTEKGRVLDVRIYTREQGDELPPGANMVVRVYVAQRRKIQVGDKMAGRHGNKGIISRILPREDMPYLPDGTPVDIVLNPLGVPSRMNVGQVFELLMGWAAANLNCRVKVVPFDEMYGAEKSHQTVQAFLEEASKQPGKAWVYNPDDPGKLLLKDGRTGEPFDQPVAVGYSHFLKLVHLVDDKIHARSTGPYSLVTQQPLGGKAQQGGQRLGEMEVWALEAYGAAYTLQELLTVKSDDMQGRNEALNAIVKGKPIPRPGTPESFKVLMRELQSLGLDIGVYTDEGKEVDLMQDINPRRNTPSRPTYESLGTSEYEED.

A disordered region spans residues 1072–1097; the sequence is QDINPRRNTPSRPTYESLGTSEYEED. Residues 1077-1091 are compositionally biased toward polar residues; it reads RRNTPSRPTYESLGT.

This sequence belongs to the RNA polymerase beta chain family. In cyanobacteria the RNAP catalytic core is composed of 2 alpha, 1 beta, 1 beta', 1 gamma and 1 omega subunit. When a sigma factor is associated with the core the holoenzyme is formed, which can initiate transcription.

It catalyses the reaction RNA(n) + a ribonucleoside 5'-triphosphate = RNA(n+1) + diphosphate. Functionally, DNA-dependent RNA polymerase catalyzes the transcription of DNA into RNA using the four ribonucleoside triphosphates as substrates. The chain is DNA-directed RNA polymerase subunit beta from Prochlorococcus marinus (strain MIT 9301).